Reading from the N-terminus, the 445-residue chain is Deoxyribodipyrimidine photo-lyase (445 aa).

The region spanning 20 to 148 (SYVVYWMQAS…QVESNVIVPV (129 aa)) is the Photolyase/cryptochrome alpha/beta domain. Arg-239 is a binding site for DNA.

This sequence belongs to the DNA photolyase class-2 family. The cofactor is FAD. Coenzyme F420-(gamma-Glu)n serves as cofactor.

It carries out the reaction cyclobutadipyrimidine (in DNA) = 2 pyrimidine residues (in DNA).. Functionally, involved in repair of UV radiation-induced DNA damage. Catalyzes the light-dependent monomerization (300-600 nm) of cyclobutyl pyrimidine dimers (in cis-syn configuration), which are formed between adjacent bases on the same DNA strand upon exposure to ultraviolet radiation. In Methanothermobacter thermautotrophicus (strain ATCC 29096 / DSM 1053 / JCM 10044 / NBRC 100330 / Delta H) (Methanobacterium thermoautotrophicum), this protein is Deoxyribodipyrimidine photo-lyase (phr).